We begin with the raw amino-acid sequence, 474 residues long: 15-cis-phytoene desaturase (474 aa).

Belongs to the carotenoid/retinoid oxidoreductase family.

It localises to the cell membrane. It carries out the reaction 2 a plastoquinone + 15-cis-phytoene = 9,9',15-tri-cis-zeta-carotene + 2 a plastoquinol. It functions in the pathway carotenoid biosynthesis; lycopene biosynthesis. Its activity is regulated as follows. Inhibited by the herbicide norflurazon in a non-competitive way. Functionally, this enzyme converts phytoene into zeta-carotene via the intermediary of phytofluene by the symmetrical introduction of two double bonds at the C-11 and C-11' positions of phytoene. Also active with phytofluene and 1,2-epoxyphytoene as substrates. This chain is 15-cis-phytoene desaturase (pds), found in Synechococcus elongatus (strain ATCC 33912 / PCC 7942 / FACHB-805) (Anacystis nidulans R2).